The following is a 77-amino-acid chain: Conotoxin ArMKLT2-0122 (77 aa).

An N-terminal signal peptide occupies residues 1-22; it reads MKLTCVLIVAVLFLTACQLIAA. A propeptide spanning residues 23 to 44 is cleaved from the precursor; sequence DDSRDLKRFSRRKMRDGMLNTK. 3 disulfides stabilise this stretch: Cys-50-Cys-65, Cys-57-Cys-68, and Cys-64-Cys-73.

The protein belongs to the conotoxin O1 superfamily. As to expression, expressed by the venom duct.

Its subcellular location is the secreted. This Conus arenatus (Sand-dusted cone) protein is Conotoxin ArMKLT2-0122.